Reading from the N-terminus, the 129-residue chain is Photosystem II extrinsic protein V (129 aa).

The heme c site is built by cysteine 35, cysteine 38, histidine 39, and histidine 90.

Belongs to the cytochrome c family. PsbV subfamily. PSII is composed of 1 copy each of membrane proteins PsbA, PsbB, PsbC, PsbD, PsbE, PsbF, PsbH, PsbI, PsbJ, PsbK, PsbL, PsbM, PsbT, PsbX, PsbY, PsbZ, Psb30/Ycf12, peripheral proteins PsbO, CyanoQ (PsbQ), PsbU, PsbV and a large number of cofactors. It forms dimeric complexes. Homodimer in crystal structure. Heme c is required as a cofactor.

It is found in the cellular thylakoid membrane. One of the extrinsic, lumenal subunits of photosystem II (PSII). PSII is a light-driven water plastoquinone oxidoreductase, using light energy to abstract electrons from H(2)O, generating a proton gradient subsequently used for ATP formation. The extrinsic proteins stabilize the structure of photosystem II oxygen-evolving complex (OEC), the ion environment of oxygen evolution and protect the OEC against heat-induced inactivation. Low-potential cytochrome c that plays a role in the OEC of PSII. The chain is Photosystem II extrinsic protein V from Limnospira maxima (Arthrospira maxima).